The primary structure comprises 162 residues: Phosphopantetheine adenylyltransferase (162 aa).

Thr10 serves as a coordination point for substrate. ATP is bound by residues 10 to 11 and His18; that span reads TF. Substrate is bound by residues Lys42, Leu74, and Arg88. ATP-binding positions include 89-91, Glu99, and 124-130; these read GLR and YAFLSSS.

The protein belongs to the bacterial CoaD family. As to quaternary structure, homohexamer. Mg(2+) serves as cofactor.

Its subcellular location is the cytoplasm. The catalysed reaction is (R)-4'-phosphopantetheine + ATP + H(+) = 3'-dephospho-CoA + diphosphate. It participates in cofactor biosynthesis; coenzyme A biosynthesis; CoA from (R)-pantothenate: step 4/5. Functionally, reversibly transfers an adenylyl group from ATP to 4'-phosphopantetheine, yielding dephospho-CoA (dPCoA) and pyrophosphate. The polypeptide is Phosphopantetheine adenylyltransferase (Methylococcus capsulatus (strain ATCC 33009 / NCIMB 11132 / Bath)).